The primary structure comprises 252 residues: Probable transcriptional regulatory protein RT0442 (252 aa).

The interval 1–22 is disordered; sequence MSGHSKFKNIQHRKGAQDKKKS.

Belongs to the TACO1 family.

The protein localises to the cytoplasm. This Rickettsia typhi (strain ATCC VR-144 / Wilmington) protein is Probable transcriptional regulatory protein RT0442.